The chain runs to 82 residues: Mitotic-spindle organizing protein 1 (82 aa).

An N-acetylalanine modification is found at Ala-2.

Belongs to the MOZART1 family. Associates with the gamma-tubulin ring complex (gTuRC) consisting of TUBGCP2, TUBGCP3, TUBGCP4, TUBGCP5 and TUBGCP6 and gamma-tubulin TUBG1 or TUBG2; within the complex, interacts with TUBGCP3 and TUBGCP6 to form a luminal bridge with actin that stabilizes the initial structure during complex assembly. Interacts with TUBG1.

The protein localises to the cytoplasm. It localises to the cytoskeleton. Its subcellular location is the microtubule organizing center. It is found in the centrosome. The protein resides in the spindle. Functionally, required for the recruitment and the assembly of the gamma-tubulin ring complex (gTuRC) at the centrosome. The gTuRC regulates the minus-end nucleation of alpha-beta tubulin heterodimers that grow into microtubule protafilaments, a critical step in centrosome duplication and spindle formation. The chain is Mitotic-spindle organizing protein 1 (MZT1) from Homo sapiens (Human).